Reading from the N-terminus, the 409-residue chain is LysM domain-containing GPI-anchored protein LYP6 (409 aa).

The signal sequence occupies residues 1-27 (MAGWPAAEAAGALVVAILAAAAGGAAG). 4 cysteine pairs are disulfide-bonded: C34/C100, C40/C166, C98/C164, and C100/C166. One can recognise a LysM 1 domain in the interval 110–160 (VRYSARPADTLASVADVVFAGLASADQIRTANGLSAEDPDAPLDAGATLVV). N-linked (GlcNAc...) asparagine glycosylation occurs at N168. In terms of domain architecture, LysM 2 spans 179 to 222 (LSYVVRVGDTVQSIAATHATTVTDISNVNAMGSPIVAPGDILAI). Intrachain disulfides connect C227/C259 and C254/C282. N-linked (GlcNAc...) asparagine glycosylation occurs at N244. 3 N-linked (GlcNAc...) asparagine glycosylation sites follow: N291, N302, and N313. The segment at 353 to 387 (SPAPGAGEAGGDIPGFPGSSNVSPANGPSGSVSQA) is disordered. The segment covering 370 to 387 (GSSNVSPANGPSGSVSQA) has biased composition (polar residues). A387 carries the GPI-anchor amidated alanine lipid modification. A propeptide spans 388 to 409 (ASVNRPHQIVALILSVALYFQM) (removed in mature form).

Interacts with LYP4. Interacts with CERK1. Interacts with CEBIP. Expressed in roots and leaves.

Its subcellular location is the cell membrane. Functions in innate immunity. Functions as a pattern recognition receptor (PRR), sensing bacterial peptidoglycan (PGN) and fungal chitin at the cell surface. Involved in resistance against the bacterial pathogen Xanthomonas oryzae pv. oryzae (Xoo) and the fungal pathogen Magnaporthe oryzae. Binds PGN and fungal chitin in vitro. Involved in microbe-associated molecular patterns (MAMPs) perception and participates in the activation of defense genes against the bacterial pathogen Xanthomonas oryzae pv. oryzicola (Xoc) or the fungal pathogen Magnaporthe oryzae. This Oryza sativa subsp. japonica (Rice) protein is LysM domain-containing GPI-anchored protein LYP6.